The chain runs to 152 residues: Catabolic 3-dehydroquinase 1 (152 aa).

Tyr-24 functions as the Proton acceptor in the catalytic mechanism. Positions 75, 81, and 88 each coordinate substrate. Residue His-101 is the Proton donor of the active site. Substrate is bound by residues 102–103 and Arg-112; that span reads VS.

It belongs to the type-II 3-dehydroquinase family. Homododecamer. Adopts a ring-like structure, composed of an arrangement of two hexameric rings stacked on top of one another.

It carries out the reaction 3-dehydroquinate = 3-dehydroshikimate + H2O. Its pathway is aromatic compound metabolism; 3,4-dihydroxybenzoate biosynthesis; 3,4-dihydroxybenzoate from 3-dehydroquinate: step 1/2. Is involved in the catabolism of quinate. Allows the utilization of quinate as carbon source via the beta-ketoadipate pathway. The sequence is that of Catabolic 3-dehydroquinase 1 from Aspergillus terreus (strain NIH 2624 / FGSC A1156).